The following is a 155-amino-acid chain: Aspartate carbamoyltransferase regulatory chain (155 aa).

Zn(2+) contacts are provided by C113, C118, C139, and C142.

It belongs to the PyrI family. In terms of assembly, contains catalytic and regulatory chains. Zn(2+) is required as a cofactor.

Functionally, involved in allosteric regulation of aspartate carbamoyltransferase. The protein is Aspartate carbamoyltransferase regulatory chain of Methanoculleus marisnigri (strain ATCC 35101 / DSM 1498 / JR1).